Consider the following 287-residue polypeptide: Zinc transporter ZIP9 (287 aa).

A helical membrane pass occupies residues 4-24; it reads FLSISLLSLAMLVGCYVAGII. Asn29 carries N-linked (GlcNAc...) asparagine glycosylation. A run of 5 helical transmembrane segments spans residues 35 to 55, 107 to 127, 147 to 167, 177 to 197, and 211 to 231; these read LKLV…AVIV, AYIG…DQIG, ITTT…LGAA, LIVF…LVSF, and HLLV…LGLS. A glycan (N-linked (GlcNAc...) asparagine) is linked at Asn242. The helical transmembrane segment at 245 to 265 threads the bilayer; the sequence is GVAMLFSAGTFLYVATVHVLP. Positions 268-287 are disordered; the sequence is TSTNQSGSSLSPRPLPSGKN. A glycan (N-linked (GlcNAc...) asparagine) is linked at Asn271. Low complexity predominate over residues 273–287; sequence SGSSLSPRPLPSGKN.

It belongs to the ZIP transporter (TC 2.A.5) family.

It localises to the golgi apparatus. Its subcellular location is the trans-Golgi network membrane. It is found in the cell membrane. The protein localises to the cytoplasm. The protein resides in the perinuclear region. It localises to the mitochondrion. Its subcellular location is the nucleus. The catalysed reaction is Zn(2+)(in) = Zn(2+)(out). Transports zinc ions across cell and organelle membranes into the cytoplasm and regulates intracellular zinc homeostasis. Participates in the zinc ions efflux out of the secretory compartments. Regulates intracellular zinc level, resulting in the enhancement of AKT1 and MAPK3/MAPK1 (Erk1/2) phosphorylation in response to the BCR activation. Also functions as a membrane androgen receptor that mediates, through a G protein, the non-classical androgen signaling pathway, characterized by the activation of MAPK3/MAPK1 (Erk1/2) and transcription factors CREB1 or ATF1. This pathway contributes to CLDN1 and CLDN5 expression and tight junction formation between adjacent Sertoli cells. Mediates androgen-induced vascular endothelial cell proliferation through activation of an inhibitory G protein leading to the AKT1 and MAPK3/MAPK1 (Erk1/2) activation which in turn modulate inhibition (phosphorylation) of GSK3B and CCND1 transcription. Moreover, has dual functions as a membrane-bound androgen receptor and as an androgen-dependent zinc transporter both of which are mediated through an inhibitory G protein (Gi) that mediates both MAP kinase and zinc signaling leading to the androgen-dependent apoptotic process. The polypeptide is Zinc transporter ZIP9 (Rattus norvegicus (Rat)).